We begin with the raw amino-acid sequence, 609 residues long: MCGIVGAIAQRDVAEILLEGLRRLEYRGYDSAGLAVVDAEGHMTRLRRLGKVQMLAQAAEEHPLHGGTGIAHTRWATHGEPSEVNAHPHVSEHIVVVHNGIIENHEPLREELKARGYTFVSETDTEVIAHLVNWELKQGGTLREAVLRAIPQLRGAYGTVIMDSRHPDTLLAARSGSPLVIGLGMGENFIASDQLALLPVTRRFIFLEEGDIAEITRRSVNIFDKTGAEVKRQDIESNLQYDAGDKGIYRHYMQKEIYEQPNAIKNTLTGRISHGQVDLSELGPNADELLSKVEHIQILACGTSYNSGMVSRYWFESLAGIPCDVEIASEFRYRKSAVRRNSLMITLSQSGETADTLAGLRLSKELGYLGSLAICNVPGSSLVRESDLALMTNAGTEIGVASTKAFTTQLTVLLMLVAKLSRLKGLDASIEHDIVHGLQALPSRIEQMLSQDKRIEALAEDFSDKHHALFLGRGDQYPIALEGALKLKEISYIHAEAYAAGELKHGPLALIDADMPVIVVAPNNELLEKLKSNIEEVRARGGQLYVFAEQDAGFVSSDNMHIIEMPHVEEVIAPIFYTVPLQLLAYHVALIKGTDVDQPRNLAKSVTVE.

The active-site Nucleophile; for GATase activity is the Cys2. The Glutamine amidotransferase type-2 domain maps to Cys2–Arg218. SIS domains follow at residues Ala286 to Leu426 and Leu458 to Pro599. Catalysis depends on Lys604, which acts as the For Fru-6P isomerization activity.

As to quaternary structure, homodimer.

Its subcellular location is the cytoplasm. The enzyme catalyses D-fructose 6-phosphate + L-glutamine = D-glucosamine 6-phosphate + L-glutamate. Its function is as follows. Catalyzes the first step in hexosamine metabolism, converting fructose-6P into glucosamine-6P using glutamine as a nitrogen source. This chain is Glutamine--fructose-6-phosphate aminotransferase [isomerizing], found in Escherichia coli O157:H7.